Here is a 461-residue protein sequence, read N- to C-terminus: Cysteine--tRNA ligase (461 aa).

Cys-29 contributes to the Zn(2+) binding site. The 'HIGH' region motif lies at 31–41; that stretch reads PTVYNYAHIGN. Zn(2+)-binding residues include Cys-214, His-239, and Glu-243. The 'KMSKS' region signature appears at 271–275; that stretch reads KMSKS. Residue Lys-274 coordinates ATP.

This sequence belongs to the class-I aminoacyl-tRNA synthetase family. In terms of assembly, monomer. Zn(2+) serves as cofactor.

The protein resides in the cytoplasm. The catalysed reaction is tRNA(Cys) + L-cysteine + ATP = L-cysteinyl-tRNA(Cys) + AMP + diphosphate. This chain is Cysteine--tRNA ligase, found in Hyphomonas neptunium (strain ATCC 15444).